The primary structure comprises 938 residues: Respiratory burst oxidase homolog protein C (938 aa).

A disordered region spans residues 1–63; sequence MQNSENHHPH…DIGTSAGAGA (63 aa). Residues 1-369 lie on the Cytoplasmic side of the membrane; sequence MQNSENHHPH…MYFLLDNWQR (369 aa). Residues 115–141 adopt a coiled-coil conformation; sequence ASLVRNASSRIRQVSQELKRLASLNKR. EF-hand-like regions lie at residues 185-195 and 222-233; these read TAPTTGLLPRA and RNITTDSINKAQ. EF-hand domains are found at residues 245–280 and 289–324; these read SFDTRLQTFFDMVDKDADGRITEEEVREIIGLSASA and QSDEYAAMIMEELDPNNLGYIMIENLEMLLLQAPNQ. Residues Asp-258, Asp-260, Asp-262, Arg-264, and Glu-269 each contribute to the Ca(2+) site. The helical transmembrane segment at 370–390 threads the bilayer; sequence VWVLLLWIGIMAVLFTWKYIQ. The Extracellular segment spans residues 391-402; it reads YKQKAAYDVMGP. The helical transmembrane segment at 403–423 threads the bilayer; it reads CVCLAKGAAETIKLNMAIILL. In terms of domain architecture, Ferric oxidoreductase spans 408 to 565; that stretch reads KGAAETIKLN…LFIIVYTLLI (158 aa). Residues 424 to 454 are Cytoplasmic-facing; it reads PVCRNTITWLRNKTRLGSAVPFDDNLNFHKV. Residues 455-475 form a helical membrane-spanning segment; that stretch reads IAVAIALGVAIHGLAHLTCDF. Over 476-509 the chain is Extracellular; it reads PKLLNASEEAYEPMIYYFGEQPESYWWFVRGVEG. The helical transmembrane segment at 510–530 threads the bilayer; sequence VTGIIMVVLMAIAFTLATPWF. Residues 531-545 lie on the Cytoplasmic side of the membrane; it reads RRGRVSFPKPFHKLT. A helical transmembrane segment spans residues 546–566; it reads GFNAFWYSHHLFIIVYTLLIV. Topologically, residues 567-580 are extracellular; sequence HGEKLYITKDWYKR. The chain crosses the membrane as a helical span at residues 581–599; it reads STWMYLTVPLVLYAGERLL. An FAD-binding FR-type domain is found at 599-727; it reads LRAFRSSIKA…DGPYGAPAQD (129 aa). Topologically, residues 600–732 are cytoplasmic; sequence RAFRSSIKAV…APAQDYKQYE (133 aa). Residues 733 to 753 form a helical membrane-spanning segment; it reads VVLLVGLGIGATPMISIVKDI. Residues 754–938 are Extracellular-facing; it reads VNNMKAMDEE…TKFDFHKENF (185 aa). The segment at 762–796 is disordered; the sequence is EEENSLENGNGMSNAAQNASPNMAQKRGKSSSASG. Over residues 767–784 the composition is skewed to polar residues; it reads LENGNGMSNAAQNASPNM.

This sequence belongs to the RBOH (TC 5.B.1.3) family. In terms of assembly, monomer and homodimer. Phosphorylated by CPK. In terms of tissue distribution, expressed in leaves.

The protein localises to the membrane. Its function is as follows. Calcium-dependent NADPH oxidase that generates superoxide. May be responsible for the oxidative burst in response to pathogen attack in the leaves. The sequence is that of Respiratory burst oxidase homolog protein C (RBOHC) from Solanum tuberosum (Potato).